The chain runs to 155 residues: Ribosomal RNA large subunit methyltransferase H (155 aa).

Residues L72, G103, and 122–127 (LSALTL) contribute to the S-adenosyl-L-methionine site.

It belongs to the RNA methyltransferase RlmH family. As to quaternary structure, homodimer.

The protein resides in the cytoplasm. It carries out the reaction pseudouridine(1915) in 23S rRNA + S-adenosyl-L-methionine = N(3)-methylpseudouridine(1915) in 23S rRNA + S-adenosyl-L-homocysteine + H(+). Functionally, specifically methylates the pseudouridine at position 1915 (m3Psi1915) in 23S rRNA. The chain is Ribosomal RNA large subunit methyltransferase H from Shigella boydii serotype 18 (strain CDC 3083-94 / BS512).